We begin with the raw amino-acid sequence, 63 residues long: Large ribosomal subunit protein bL28 (63 aa).

The protein belongs to the bacterial ribosomal protein bL28 family.

This Hydrogenobaculum sp. (strain Y04AAS1) protein is Large ribosomal subunit protein bL28.